Reading from the N-terminus, the 179-residue chain is GTP-dependent dephospho-CoA kinase (179 aa).

6 residues coordinate GTP: D49, V50, V51, D68, K70, and E126.

It belongs to the GTP-dependent DPCK family.

The enzyme catalyses 3'-dephospho-CoA + GTP = GDP + CoA + H(+). Its pathway is cofactor biosynthesis; coenzyme A biosynthesis. Its function is as follows. Catalyzes the GTP-dependent phosphorylation of the 3'-hydroxyl group of dephosphocoenzyme A to form coenzyme A (CoA). This is GTP-dependent dephospho-CoA kinase from Pyrococcus abyssi (strain GE5 / Orsay).